Consider the following 783-residue polypeptide: Polyadenylate-binding protein, cytoplasmic and nuclear (783 aa).

The segment at Asp-16–Ala-65 is disordered. The segment covering Pro-54–Ala-65 has biased composition (low complexity). RRM domains lie at Ala-65–Arg-143, Gly-153–Pro-230, Thr-246–Lys-323, and Val-349–Arg-471. Disordered stretches follow at residues Met-381 to Arg-428, Ala-596 to Gly-671, and Val-752 to Ala-783. Positions Gly-396–Glu-406 are enriched in basic and acidic residues. A compositionally biased stretch (acidic residues) spans Gln-407–Glu-416. The segment covering Gly-417–Arg-428 has biased composition (basic and acidic residues). Positions Asn-601 to Met-614 are enriched in gly residues. Over residues Ala-630–Gly-641 the composition is skewed to low complexity. A compositionally biased stretch (gly residues) spans Asn-642–Phe-655. Residues Ala-656–Gly-671 are compositionally biased toward low complexity. The region spanning Ser-676–Lys-753 is the PABC domain. Residues Glu-770–Ala-783 show a composition bias toward basic and acidic residues.

Belongs to the polyadenylate-binding protein type-1 family.

Its subcellular location is the cytoplasm. It localises to the nucleus. Its function is as follows. Binds the poly(A) tail of mRNA. Appears to be an important mediator of the multiple roles of the poly(A) tail in mRNA biogenesis, stability and translation. In the nucleus, involved in both mRNA cleavage and polyadenylation. Is also required for efficient mRNA export to the cytoplasm. Acts in concert with a poly(A)-specific nuclease (PAN) to affect poly(A) tail shortening, which may occur concomitantly with either nucleocytoplasmic mRNA transport or translational initiation. In the cytoplasm, stimulates translation initiation and regulates mRNA decay through translation termination-coupled poly(A) shortening, probably mediated by PAN. The sequence is that of Polyadenylate-binding protein, cytoplasmic and nuclear (PAB1) from Chaetomium globosum (strain ATCC 6205 / CBS 148.51 / DSM 1962 / NBRC 6347 / NRRL 1970) (Soil fungus).